Reading from the N-terminus, the 218-residue chain is Cell division protein SepF (218 aa).

The segment at 20–81 (DDEYYDDRAP…GYRGGYADEP (62 aa)) is disordered. The segment covering 36–65 (PRFDDDYGRYDGRDYDDARSDSRGDLRGEP) has biased composition (basic and acidic residues).

It belongs to the SepF family. Homodimer. Interacts with FtsZ.

The protein localises to the cytoplasm. Functionally, cell division protein that is part of the divisome complex and is recruited early to the Z-ring. Probably stimulates Z-ring formation, perhaps through the cross-linking of FtsZ protofilaments. Its function overlaps with FtsA. This is Cell division protein SepF from Mycobacterium bovis (strain ATCC BAA-935 / AF2122/97).